The chain runs to 231 residues: 5'-methylthioadenosine/S-adenosylhomocysteine nucleosidase (231 aa).

Residue Glu13 is the Proton acceptor of the active site. Substrate is bound by residues Gly79, Met153, and 174–175 (ME). Asp198 serves as the catalytic Proton donor.

It belongs to the PNP/UDP phosphorylase family. MtnN subfamily.

It carries out the reaction S-adenosyl-L-homocysteine + H2O = S-(5-deoxy-D-ribos-5-yl)-L-homocysteine + adenine. The enzyme catalyses S-methyl-5'-thioadenosine + H2O = 5-(methylsulfanyl)-D-ribose + adenine. The catalysed reaction is 5'-deoxyadenosine + H2O = 5-deoxy-D-ribose + adenine. The protein operates within amino-acid biosynthesis; L-methionine biosynthesis via salvage pathway; S-methyl-5-thio-alpha-D-ribose 1-phosphate from S-methyl-5'-thioadenosine (hydrolase route): step 1/2. In terms of biological role, catalyzes the irreversible cleavage of the glycosidic bond in both 5'-methylthioadenosine (MTA) and S-adenosylhomocysteine (SAH/AdoHcy) to adenine and the corresponding thioribose, 5'-methylthioribose and S-ribosylhomocysteine, respectively. Also cleaves 5'-deoxyadenosine, a toxic by-product of radical S-adenosylmethionine (SAM) enzymes, into 5-deoxyribose and adenine. In Halalkalibacterium halodurans (strain ATCC BAA-125 / DSM 18197 / FERM 7344 / JCM 9153 / C-125) (Bacillus halodurans), this protein is 5'-methylthioadenosine/S-adenosylhomocysteine nucleosidase.